Here is a 340-residue protein sequence, read N- to C-terminus: Phosphoribosylformylglycinamidine cyclo-ligase (340 aa).

The protein belongs to the AIR synthase family.

The protein localises to the cytoplasm. The enzyme catalyses 2-formamido-N(1)-(5-O-phospho-beta-D-ribosyl)acetamidine + ATP = 5-amino-1-(5-phospho-beta-D-ribosyl)imidazole + ADP + phosphate + H(+). The protein operates within purine metabolism; IMP biosynthesis via de novo pathway; 5-amino-1-(5-phospho-D-ribosyl)imidazole from N(2)-formyl-N(1)-(5-phospho-D-ribosyl)glycinamide: step 2/2. The chain is Phosphoribosylformylglycinamidine cyclo-ligase from Streptococcus pneumoniae serotype 19F (strain G54).